A 138-amino-acid chain; its full sequence is Basic phospholipase A2 Sct-N6 (138 aa).

Residues 1–16 (MRTFWIVAVLLVGVEG) form the signal peptide. 7 disulfide bridges follow: Cys-42–Cys-131, Cys-44–Cys-60, Cys-59–Cys-111, Cys-65–Cys-138, Cys-66–Cys-104, Cys-73–Cys-97, and Cys-91–Cys-102. Positions 43, 45, and 47 each coordinate Ca(2+). The active site involves His-63. Residue Asp-64 coordinates Ca(2+). Residue Asp-105 is part of the active site.

It belongs to the phospholipase A2 family. Group II subfamily. D49 sub-subfamily. Ca(2+) serves as cofactor. Expressed by the venom gland.

The protein localises to the secreted. The enzyme catalyses a 1,2-diacyl-sn-glycero-3-phosphocholine + H2O = a 1-acyl-sn-glycero-3-phosphocholine + a fatty acid + H(+). Its function is as follows. Snake venom phospholipase A2 (PLA2) that displays edema-inducing activities, as well as presynaptic neurotoxicity and low myotoxicity. PLA2 catalyzes the calcium-dependent hydrolysis of the 2-acyl groups in 3-sn-phosphoglycerides. The sequence is that of Basic phospholipase A2 Sct-N6 from Sistrurus tergeminus (Western massasauga).